A 158-amino-acid polypeptide reads, in one-letter code: MKVLGIDPGSRYCGYAIVEKINNKNQLIEAGLIKIKPNDLQYQITELCEGLDLIFKNHQFDEVAIEDIFFAYNPKTVLKLAQFRGALSLKILQMHGEFAEYTPLQVKKTVTGKAKATKEQVAFMVKRLLGISKDIKPLDITDAIAVALTHSANLRVKK.

Active-site residues include Asp7, Glu66, and Asp139. Mg(2+)-binding residues include Asp7, Glu66, and Asp139.

Belongs to the RuvC family. As to quaternary structure, homodimer which binds Holliday junction (HJ) DNA. The HJ becomes 2-fold symmetrical on binding to RuvC with unstacked arms; it has a different conformation from HJ DNA in complex with RuvA. In the full resolvosome a probable DNA-RuvA(4)-RuvB(12)-RuvC(2) complex forms which resolves the HJ. Mg(2+) serves as cofactor.

Its subcellular location is the cytoplasm. The enzyme catalyses Endonucleolytic cleavage at a junction such as a reciprocal single-stranded crossover between two homologous DNA duplexes (Holliday junction).. The RuvA-RuvB-RuvC complex processes Holliday junction (HJ) DNA during genetic recombination and DNA repair. Endonuclease that resolves HJ intermediates. Cleaves cruciform DNA by making single-stranded nicks across the HJ at symmetrical positions within the homologous arms, yielding a 5'-phosphate and a 3'-hydroxyl group; requires a central core of homology in the junction. The consensus cleavage sequence is 5'-(A/T)TT(C/G)-3'. Cleavage occurs on the 3'-side of the TT dinucleotide at the point of strand exchange. HJ branch migration catalyzed by RuvA-RuvB allows RuvC to scan DNA until it finds its consensus sequence, where it cleaves and resolves the cruciform DNA. The protein is Crossover junction endodeoxyribonuclease RuvC of Campylobacter lari (strain RM2100 / D67 / ATCC BAA-1060).